A 489-amino-acid chain; its full sequence is MTFRNCVAVDLGASSGRVMLARYERECRSLTLREIHRFKNGLHSQNGYVTWNVDSLESAIRLGLNKVCEEGIRIDSIGIDTWGVDFVLLDQQGQRVGLPVAYRDSRTNGLMAQAQQQLGKRDIYQRSGIQFLPFNTLYQLRALTEQQPELIPHIAHALLMPDYFSYRLTGKMNWEYTNATTTQLVNINSDDWDESLLAWSGANKAWFGRPTHPGNVIGHWICPQGNEIPVVAVASHDTASAVIASPLNGSRAAYLSSGTWSLMGFESQTPFTNDTALAANITNEGGAEGRYRVLKNIMGLWLLQRVLQERQINDLPALIAATQALPACRFIINPNDDRFINPEAMCSEIQAACRETAQPIPESDAELARCIFDSLALLYADVLHELAQLRGEDFSQLHIVGGGCQNTLLNQLCADACGIRVIAGPVEASTLGNIGIQLMTLDELNNVDDFRQVVSTTANLTTFTPNPDSEIAHYVAQIHSTRQTKELCA.

An ATP-binding site is contributed by 13–17; sequence ASSGR. A disulfide bond links Cys68 and Cys222. Substrate is bound by residues Gly83 and 236–238; that span reads HDT. Asp237 acts as the Proton acceptor in catalysis. Thr259 is a binding site for ATP. A substrate-binding site is contributed by Asn296. Gln304 is a binding site for ATP. Cys353 and Cys370 are joined by a disulfide. An ATP-binding site is contributed by Gly402. Residues Cys413 and Cys417 are joined by a disulfide bond.

It belongs to the rhamnulokinase family. In terms of assembly, monomer. The cofactor is Mg(2+).

The catalysed reaction is L-rhamnulose + ATP = L-rhamnulose 1-phosphate + ADP + H(+). Its pathway is carbohydrate degradation; L-rhamnose degradation; glycerone phosphate from L-rhamnose: step 2/3. Involved in the catabolism of L-rhamnose (6-deoxy-L-mannose). Catalyzes the transfer of the gamma-phosphate group from ATP to the 1-hydroxyl group of L-rhamnulose to yield L-rhamnulose 1-phosphate. In Escherichia coli (strain SE11), this protein is Rhamnulokinase.